The following is an 884-amino-acid chain: Cytosolic carboxypeptidase-like protein 5 (884 aa).

Residues 157-570 (YPFSYSDCQD…AMAIAALDMA (414 aa)) form the Peptidase M14 domain. Zn(2+) contacts are provided by His252 and Glu255. Disordered stretches follow at residues 343 to 364 (HPQS…PLSD) and 376 to 401 (HLGH…KASG). His434 is a binding site for Zn(2+). Catalysis depends on Glu516, which acts as the Proton donor/acceptor. Disordered regions lie at residues 603-737 (LSST…HSTG) and 784-859 (QVRP…RICY). Over residues 620–635 (PPRSNSGLPVSCSENP) the composition is skewed to polar residues. Low complexity-rich tracts occupy residues 641 to 666 (SFST…NSPS) and 714 to 737 (PTSS…HSTG). Ser839 is subject to Phosphoserine. Residues 846-857 (ISCSLSDSQSRI) show a composition bias toward polar residues.

It belongs to the peptidase M14 family. Zn(2+) serves as cofactor.

The protein resides in the cytoplasm. It localises to the cytosol. It is found in the nucleus. The protein localises to the cytoskeleton. Its subcellular location is the spindle. The protein resides in the midbody. It catalyses the reaction gamma-L-glutamyl-L-glutamyl-[protein] + H2O = L-glutamyl-[protein] + L-glutamate. The enzyme catalyses (L-glutamyl)(n+1)-gamma-L-glutamyl-L-glutamyl-[protein] + H2O = (L-glutamyl)(n)-gamma-L-glutamyl-L-glutamyl-[protein] + L-glutamate. It carries out the reaction C-terminal L-alpha-aminoacyl-L-glutamyl-[tubulin] + H2O = C-terminal L-alpha-aminoacyl-[tubulin] + L-glutamate. The catalysed reaction is C-terminal L-alpha-aminoacyl-L-glutamyl-L-glutamyl-[tubulin] + H2O = C-terminal L-alpha-aminoacyl-L-glutamyl-[tubulin] + L-glutamate. Its function is as follows. Metallocarboxypeptidase that mediates deglutamylation of tubulin and non-tubulin target proteins. Catalyzes the removal of polyglutamate side chains present on the gamma-carboxyl group of glutamate residues within the C-terminal tail of alpha- and beta-tubulin. Cleaves alpha- and gamma-linked polyglutamate tubulin side-chain, as well as the branching point glutamate. Also catalyzes the removal of alpha-linked glutamate residues from the carboxy-terminus of alpha-tubulin. Mediates deglutamylation of nucleotidyltransferase CGAS, leading to CGAS antiviral defense response activation. This is Cytosolic carboxypeptidase-like protein 5 (AGBL5) from Ailuropoda melanoleuca (Giant panda).